The primary structure comprises 261 residues: uncharacterized protein (261 aa).

Residues Ile-33, Lys-60, Asp-78, and Asn-105 each coordinate NADP(+). The Proton donor role is filled by Ser-157. The NADP(+) site is built by Tyr-172, Lys-176, and Thr-206. Tyr-172 serves as the catalytic Proton acceptor. The Lowers pKa of active site Tyr role is filled by Lys-176.

It belongs to the short-chain dehydrogenases/reductases (SDR) family.

It is found in the cytoplasm. The protein resides in the nucleus. This is an uncharacterized protein from Schizosaccharomyces pombe (strain 972 / ATCC 24843) (Fission yeast).